We begin with the raw amino-acid sequence, 709 residues long: Phosphomethylpyrimidine synthase (709 aa).

Positions 1 to 13 (MNIRSNPDTTLPA) are enriched in polar residues. 2 disordered regions span residues 1-21 (MNIRSNPDTTLPAVTTGPLPS) and 125-168 (DAPA…GREQ). Residues Asn274, Met303, Tyr332, His368, 388-390 (SRG), 429-432 (DGLR), and Glu468 contribute to the substrate site. His472 serves as a coordination point for Zn(2+). Substrate is bound at residue Tyr495. His536 lines the Zn(2+) pocket. [4Fe-4S] cluster is bound by residues Cys616, Cys619, and Cys624.

This sequence belongs to the ThiC family. Homodimer. [4Fe-4S] cluster serves as cofactor.

The enzyme catalyses 5-amino-1-(5-phospho-beta-D-ribosyl)imidazole + S-adenosyl-L-methionine = 4-amino-2-methyl-5-(phosphooxymethyl)pyrimidine + CO + 5'-deoxyadenosine + formate + L-methionine + 3 H(+). The protein operates within cofactor biosynthesis; thiamine diphosphate biosynthesis. Catalyzes the synthesis of the hydroxymethylpyrimidine phosphate (HMP-P) moiety of thiamine from aminoimidazole ribotide (AIR) in a radical S-adenosyl-L-methionine (SAM)-dependent reaction. The polypeptide is Phosphomethylpyrimidine synthase (Rhodopseudomonas palustris (strain BisB18)).